Reading from the N-terminus, the 364-residue chain is UDP-N-acetylglucosamine--N-acetylmuramyl-(pentapeptide) pyrophosphoryl-undecaprenol N-acetylglucosamine transferase (364 aa).

Residues Thr-10–Gly-12, Asn-126, Arg-167, Ser-199, Ile-253, and Gln-298 each bind UDP-N-acetyl-alpha-D-glucosamine.

The protein belongs to the glycosyltransferase 28 family. MurG subfamily.

It localises to the cell inner membrane. It carries out the reaction di-trans,octa-cis-undecaprenyl diphospho-N-acetyl-alpha-D-muramoyl-L-alanyl-D-glutamyl-meso-2,6-diaminopimeloyl-D-alanyl-D-alanine + UDP-N-acetyl-alpha-D-glucosamine = di-trans,octa-cis-undecaprenyl diphospho-[N-acetyl-alpha-D-glucosaminyl-(1-&gt;4)]-N-acetyl-alpha-D-muramoyl-L-alanyl-D-glutamyl-meso-2,6-diaminopimeloyl-D-alanyl-D-alanine + UDP + H(+). Its pathway is cell wall biogenesis; peptidoglycan biosynthesis. In terms of biological role, cell wall formation. Catalyzes the transfer of a GlcNAc subunit on undecaprenyl-pyrophosphoryl-MurNAc-pentapeptide (lipid intermediate I) to form undecaprenyl-pyrophosphoryl-MurNAc-(pentapeptide)GlcNAc (lipid intermediate II). The polypeptide is UDP-N-acetylglucosamine--N-acetylmuramyl-(pentapeptide) pyrophosphoryl-undecaprenol N-acetylglucosamine transferase (Amoebophilus asiaticus (strain 5a2)).